The following is a 222-amino-acid chain: Phosphoribosylformylglycinamidine synthase subunit PurQ (222 aa).

A Glutamine amidotransferase type-1 domain is found at 2–222 (SVAIVRFPGT…DNLLHIAEMK (221 aa)). The active-site Nucleophile is Cys86. Catalysis depends on residues His194 and Glu196.

In terms of assembly, part of the FGAM synthase complex composed of 1 PurL, 1 PurQ and 2 PurS subunits.

The protein resides in the cytoplasm. The enzyme catalyses N(2)-formyl-N(1)-(5-phospho-beta-D-ribosyl)glycinamide + L-glutamine + ATP + H2O = 2-formamido-N(1)-(5-O-phospho-beta-D-ribosyl)acetamidine + L-glutamate + ADP + phosphate + H(+). It catalyses the reaction L-glutamine + H2O = L-glutamate + NH4(+). The protein operates within purine metabolism; IMP biosynthesis via de novo pathway; 5-amino-1-(5-phospho-D-ribosyl)imidazole from N(2)-formyl-N(1)-(5-phospho-D-ribosyl)glycinamide: step 1/2. Functionally, part of the phosphoribosylformylglycinamidine synthase complex involved in the purines biosynthetic pathway. Catalyzes the ATP-dependent conversion of formylglycinamide ribonucleotide (FGAR) and glutamine to yield formylglycinamidine ribonucleotide (FGAM) and glutamate. The FGAM synthase complex is composed of three subunits. PurQ produces an ammonia molecule by converting glutamine to glutamate. PurL transfers the ammonia molecule to FGAR to form FGAM in an ATP-dependent manner. PurS interacts with PurQ and PurL and is thought to assist in the transfer of the ammonia molecule from PurQ to PurL. This chain is Phosphoribosylformylglycinamidine synthase subunit PurQ, found in Helicobacter hepaticus (strain ATCC 51449 / 3B1).